A 268-amino-acid polypeptide reads, in one-letter code: tRNA (guanine-N(7)-)-methyltransferase (268 aa).

Residues 1-21 (MMAGAEAPQPQKRYYRQRAHS) are disordered. Position 21 is a phosphoserine (Ser21). Residues Gly78, Glu101, Arg103, Asn134, Ala135, and Leu154 each coordinate S-adenosyl-L-methionine. Asp157 is an active-site residue. The interval 158-166 (PHFKRTKHK) is alphaC helix. 2 residues coordinate S-adenosyl-L-methionine: Thr232 and Glu234. The tract at residues 232-240 (TEEGKKVLR) is alpha6 helix.

The protein belongs to the class I-like SAM-binding methyltransferase superfamily. TrmB family. Catalytic component of the METTL1-WDR4 complex, composed of METTL1 and WDR4. Post-translationally, phosphorylation at Ser-21 by PKB/AKT1 inactivates its methyltransferase activity via a steric interference mechanism in the active site that locally disrupts the catalytic center. Phosphorylation at Ser-21 does not affect the interaction with WDR4.

The protein localises to the nucleus. It catalyses the reaction guanosine(46) in tRNA + S-adenosyl-L-methionine = N(7)-methylguanosine(46) in tRNA + S-adenosyl-L-homocysteine. The enzyme catalyses a guanosine in mRNA + S-adenosyl-L-methionine = an N(7)-methylguanosine in mRNA + S-adenosyl-L-homocysteine. It carries out the reaction a guanosine in miRNA + S-adenosyl-L-methionine = an N(7)-methylguanosine in miRNA + S-adenosyl-L-homocysteine. Its pathway is tRNA modification; N(7)-methylguanine-tRNA biosynthesis. Catalytic component of METTL1-WDR4 methyltransferase complex that mediates the formation of N(7)-methylguanine in a subset of RNA species, such as tRNAs, mRNAs and microRNAs (miRNAs). Catalyzes the formation of N(7)-methylguanine at position 46 (m7G46) in a large subset of tRNAs that contain the 5'-RAGGU-3' motif within the variable loop. M7G46 interacts with C13-G22 in the D-loop to stabilize tRNA tertiary structure and protect tRNAs from decay. Also acts as a methyltransferase for a subset of internal N(7)-methylguanine in mRNAs. Internal N(7)-methylguanine methylation of mRNAs in response to stress promotes their relocalization to stress granules, thereby suppressing their translation. Also methylates a specific subset of miRNAs, such as let-7. N(7)-methylguanine methylation of let-7 miRNA promotes let-7 miRNA processing by disrupting an inhibitory secondary structure within the primary miRNA transcript (pri-miRNA). Acts as a regulator of embryonic stem cell self-renewal and differentiation. The chain is tRNA (guanine-N(7)-)-methyltransferase from Mus musculus (Mouse).